Consider the following 187-residue polypeptide: Elongation factor P (187 aa).

It belongs to the elongation factor P family.

The protein localises to the cytoplasm. Its pathway is protein biosynthesis; polypeptide chain elongation. In terms of biological role, involved in peptide bond synthesis. Stimulates efficient translation and peptide-bond synthesis on native or reconstituted 70S ribosomes in vitro. Probably functions indirectly by altering the affinity of the ribosome for aminoacyl-tRNA, thus increasing their reactivity as acceptors for peptidyl transferase. The protein is Elongation factor P of Corynebacterium aurimucosum (strain ATCC 700975 / DSM 44827 / CIP 107346 / CN-1) (Corynebacterium nigricans).